The primary structure comprises 675 residues: MGSNQDFRNLQAKFQTSQPELGELFRKTPKPELNKVLKKFPQTELSEQPKKSSQSELSAVSLKPLQLQFADLPRKPPQPGVLKKSPQPEFPHLANKPVQAEFPRKPLHPEFTGLKKPSQAEFTDLKKPPQPQFASLPKKPPKPEFGELSKRPPQLETPQEPSAPPAQKLLKPEPNNPARPLGELKPKMFWHLEANEAPKRPLPSESSTFPKKPLQPEAVVGFSRKSQPQSESIEVSQTSPSKCGSRELDSHSPQPDISTFPKNNENFRKPSYPQATGCPKSPKQPMFYEFPQTPPRKPESCNPQSHSPLPDFNAFPKKHPQLQPSDLTRASSEPEVCKVPKKTQKPDPNVLSQKPSQPELGHLPRTSSDPEFNSLPRKFLQPQHGKFFQPEFPKGLPRKPKLPGSVSECSLPSASAGSSPQCPLSPGLIVPGIPRWRSEDFQVQRPPRRRPLPSASSLGHPPAKPALPPGPINIQSFRRAAATAAAVLKTGSSTGTHFQAQQPQHIAQNPDEIYELYDAVEATDDSSISPRGRDEMLSTQQATRWPQQEPELRKKATQPQQLPATDPKLLKQIRKAEKAEREFRKKFKFEGEIVIHTKMMIDPNAKTRRGGGKHLGIRRGEILEVIEFTSKDEMLCRDPKGKYGYVPRTALLPLETEVYDDVSFGDPLDMQPFPR.

Residues 1 to 19 (MGSNQDFRNLQAKFQTSQP) show a composition bias toward polar residues. Disordered regions lie at residues 1–473 (MGSN…GPIN) and 523–562 (TDDSSISPRGRDEMLSTQQATRWPQQEPELRKKATQPQQL). Basic and acidic residues predominate over residues 23–35 (ELFRKTPKPELNK). The segment covering 43–58 (TELSEQPKKSSQSELS) has biased composition (polar residues). The segment covering 141–150 (PKPEFGELSK) has biased composition (basic and acidic residues). 3 stretches are compositionally biased toward polar residues: residues 224-242 (RKSQPQSESIEVSQTSPSK), 251-264 (HSPQPDISTFPKNN), and 322-331 (LQPSDLTRAS). Position 374 is a phosphoserine (S374). Positions 407–422 (SECSLPSASAGSSPQC) are enriched in polar residues. Positions 462-471 (PAKPALPPGP) are enriched in pro residues. Positions 537–546 (LSTQQATRWP) are enriched in polar residues. Residues 578 to 656 (KAEREFRKKF…PRTALLPLET (79 aa)) form the SH3 domain.

In terms of assembly, interacts with SKAP2, LCP2 and DBNL. May interact with LYN. Interacts with NEK6. May be phosphorylated on tyrosines. In terms of tissue distribution, expressed in bone marrow and mature neutrophils. Weakly expressed in macrophages and mast cells.

May be involved in integrin signaling in neutrophils. Binds to PtdIns(4)P. The polypeptide is PML-RARA-regulated adapter molecule 1 (Pram1) (Mus musculus (Mouse)).